We begin with the raw amino-acid sequence, 188 residues long: Tuftelin (188 aa).

Residues 1-181 (SLRKTVQDLL…DRMEHLIEKQ (181 aa)) are a coiled coil.

The protein belongs to the tuftelin family. In terms of assembly, interacts with TFIP11.

It localises to the secreted. In terms of biological role, involved in the structural organization of the epidermis. Involved in the mineralization and structural organization of enamel. The sequence is that of Tuftelin (TUFT1) from Sus scrofa (Pig).